The primary structure comprises 392 residues: Formate-dependent phosphoribosylglycinamide formyltransferase (392 aa).

N(1)-(5-phospho-beta-D-ribosyl)glycinamide contacts are provided by residues 22 to 23 (EL) and glutamate 82. ATP-binding positions include arginine 114, lysine 155, 160–165 (SSGKGQ), 195–198 (EGVV), and glutamate 203. Residues 119–308 (RLAAEELGLP…EFALHVRAFL (190 aa)) enclose the ATP-grasp domain. Residues glutamate 267 and glutamate 279 each contribute to the Mg(2+) site. N(1)-(5-phospho-beta-D-ribosyl)glycinamide-binding positions include aspartate 286, lysine 355, and 362-363 (RR).

Belongs to the PurK/PurT family. Homodimer.

It carries out the reaction N(1)-(5-phospho-beta-D-ribosyl)glycinamide + formate + ATP = N(2)-formyl-N(1)-(5-phospho-beta-D-ribosyl)glycinamide + ADP + phosphate + H(+). It participates in purine metabolism; IMP biosynthesis via de novo pathway; N(2)-formyl-N(1)-(5-phospho-D-ribosyl)glycinamide from N(1)-(5-phospho-D-ribosyl)glycinamide (formate route): step 1/1. In terms of biological role, involved in the de novo purine biosynthesis. Catalyzes the transfer of formate to 5-phospho-ribosyl-glycinamide (GAR), producing 5-phospho-ribosyl-N-formylglycinamide (FGAR). Formate is provided by PurU via hydrolysis of 10-formyl-tetrahydrofolate. This Salmonella paratyphi A (strain ATCC 9150 / SARB42) protein is Formate-dependent phosphoribosylglycinamide formyltransferase.